We begin with the raw amino-acid sequence, 226 residues long: Xanthocillin biosynthesis cluster protein F (226 aa).

It functions in the pathway secondary metabolite biosynthesis. In terms of biological role, part of the gene cluster that mediates the biosynthesis of the isocyanide xanthocillin and its derivatives. The first step of the pathway consists in the conversion of tyrosine into a vinyl-isonitrile intermediate by the isocyanide synthase xanB. Subsequent oxidative dimerization of this intermediate to form xanthocillin may involve the cytochrome P450 monooxygenase xanG, whose expression is coregulated with that of XanB. Xanthocillin can be further modified by the isonitrile hydratase-like protein xanA which introduces N-formyl groups and the methyltransferase xanE which introduces methyl groups, leading to the production of several derivatives including fumiformamide. Finally, fumiformamide can be subject to both oxidative and reductive cyclization to yield melanocins E and F, respectively. In Aspergillus fumigatus (strain ATCC MYA-4609 / CBS 101355 / FGSC A1100 / Af293) (Neosartorya fumigata), this protein is Xanthocillin biosynthesis cluster protein F.